Reading from the N-terminus, the 510-residue chain is NAD(P)H-quinone oxidoreductase subunit 2 A, chloroplastic (510 aa).

Helical transmembrane passes span 31-51 (FIFP…IDLT), 57-77 (TPWL…ALLF), 99-119 (IFQF…VEYI), 124-144 (MAIT…MFLC), 149-169 (LITI…LSGY), 183-203 (YLLM…WLYG), 229-249 (ISIA…PAPF), 295-315 (WHLL…LIAI), 323-343 (MLAY…IVGD), 354-374 (YMLF…LFGL), 395-415 (ALSS…AGFF), 418-438 (LYLF…IGLL), and 484-504 (MIVC…IIAI).

It belongs to the complex I subunit 2 family. As to quaternary structure, NDH is composed of at least 16 different subunits, 5 of which are encoded in the nucleus.

It is found in the plastid. The protein resides in the chloroplast thylakoid membrane. It catalyses the reaction a plastoquinone + NADH + (n+1) H(+)(in) = a plastoquinol + NAD(+) + n H(+)(out). The enzyme catalyses a plastoquinone + NADPH + (n+1) H(+)(in) = a plastoquinol + NADP(+) + n H(+)(out). Functionally, NDH shuttles electrons from NAD(P)H:plastoquinone, via FMN and iron-sulfur (Fe-S) centers, to quinones in the photosynthetic chain and possibly in a chloroplast respiratory chain. The immediate electron acceptor for the enzyme in this species is believed to be plastoquinone. Couples the redox reaction to proton translocation, and thus conserves the redox energy in a proton gradient. The protein is NAD(P)H-quinone oxidoreductase subunit 2 A, chloroplastic of Nymphaea alba (White water-lily).